The following is a 359-amino-acid chain: Aminomethyltransferase (359 aa).

The protein belongs to the GcvT family. The glycine cleavage system is composed of four proteins: P, T, L and H.

The catalysed reaction is N(6)-[(R)-S(8)-aminomethyldihydrolipoyl]-L-lysyl-[protein] + (6S)-5,6,7,8-tetrahydrofolate = N(6)-[(R)-dihydrolipoyl]-L-lysyl-[protein] + (6R)-5,10-methylene-5,6,7,8-tetrahydrofolate + NH4(+). The glycine cleavage system catalyzes the degradation of glycine. The chain is Aminomethyltransferase from Idiomarina loihiensis (strain ATCC BAA-735 / DSM 15497 / L2-TR).